A 497-amino-acid polypeptide reads, in one-letter code: Glycerol kinase (497 aa).

Thr-11 provides a ligand contact to ADP. Residues Thr-11, Ser-12, and Ser-13 each contribute to the ATP site. Residue Thr-11 participates in sn-glycerol 3-phosphate binding. Position 15 (Arg-15) interacts with ADP. Residues Arg-81, Glu-82, Tyr-133, and Asp-242 each coordinate sn-glycerol 3-phosphate. 5 residues coordinate glycerol: Arg-81, Glu-82, Tyr-133, Asp-242, and Gln-243. Residues Thr-264 and Gly-307 each coordinate ADP. ATP contacts are provided by Thr-264, Gly-307, Gln-311, and Gly-412. Positions 412 and 416 each coordinate ADP.

The protein belongs to the FGGY kinase family.

The catalysed reaction is glycerol + ATP = sn-glycerol 3-phosphate + ADP + H(+). Its pathway is polyol metabolism; glycerol degradation via glycerol kinase pathway; sn-glycerol 3-phosphate from glycerol: step 1/1. Inhibited by fructose 1,6-bisphosphate (FBP). In terms of biological role, key enzyme in the regulation of glycerol uptake and metabolism. Catalyzes the phosphorylation of glycerol to yield sn-glycerol 3-phosphate. The protein is Glycerol kinase of Leptothrix cholodnii (strain ATCC 51168 / LMG 8142 / SP-6) (Leptothrix discophora (strain SP-6)).